Consider the following 318-residue polypeptide: MIETNVSRRHHESFLQVIQSYYQLTKPRIIPLLLITTAGSMWIAAQGQVDPVLLLVTMAGGTLAAASAQTINCIYDRDIDYDMERTRHRPMPSGKVQVRDALIFAIALAVLSFTLLTVFANLLAASLALSGIIFYVLIYTHWLKRHSTQNIVIGGAAGAIPALVGWAAVTGTLSWSAWLIFAIVFLWTPPHFWALALMIRDDYAKVGIPMLPVVEGNAATVKQIWYYTLITVVATLLLVYPLHSSGIVYAAIAISLGAVFIRKSWRLLHNPEDRPTARELFLYSISYMMLLCLGMVIDSLPLTHHLINAVINQLHLIS.

The next 9 helical transmembrane spans lie at 29–49 (IIPLLLITTAGSMWIAAQGQV), 51–71 (PVLLLVTMAGGTLAAASAQTI), 102–122 (LIFAIALAVLSFTLLTVFANL), 123–143 (LAASLALSGIIFYVLIYTHWL), 151–171 (IVIGGAAGAIPALVGWAAVTG), 179–199 (LIFAIVFLWTPPHFWALALMI), 219–239 (ATVKQIWYYTLITVVATLLLV), 241–261 (PLHSSGIVYAAIAISLGAVFI), and 280–300 (LFLYSISYMMLLCLGMVIDSL).

It belongs to the UbiA prenyltransferase family. Protoheme IX farnesyltransferase subfamily.

The protein resides in the cell inner membrane. The enzyme catalyses heme b + (2E,6E)-farnesyl diphosphate + H2O = Fe(II)-heme o + diphosphate. It functions in the pathway porphyrin-containing compound metabolism; heme O biosynthesis; heme O from protoheme: step 1/1. In terms of biological role, converts heme B (protoheme IX) to heme O by substitution of the vinyl group on carbon 2 of heme B porphyrin ring with a hydroxyethyl farnesyl side group. This Trichormus variabilis (strain ATCC 29413 / PCC 7937) (Anabaena variabilis) protein is Protoheme IX farnesyltransferase.